A 357-amino-acid chain; its full sequence is MGSLDAKPAAATQEVSIKDQAQLWNIIYGFADSLVLRCAVEIGIADIIKNNDGAITLAQLAAKLPITNVSSDYLYRMVRYLVHLNIIEQETCNGGVEKVYSLKPVGTLLLRDAERSMVPMILGMTQKDFMVSWHFMKEGLGNGSTTAFEKGMGMDIWKYLEGNPDQSQLFNEGMAGETRLLTKTLIEDCRDTFQGLDSLVDIGGGNGTTIKAIYEAFPHIKCTLYDLPHVVANSHDLPNIEKVPGDMFKSVPSAQAILLKLILHDWTDEECVNILKKCKEAIPKETGKVIIVDVALEEESNHELTKTRLILDIDMLVNTGGRERTADDWENLLKRAGFRSHKIRPIRAIQSVIEAFP.

Asp226 provides a ligand contact to S-adenosyl-L-methionine. The active-site Proton acceptor is His264.

Belongs to the class I-like SAM-binding methyltransferase superfamily. Cation-independent O-methyltransferase family. COMT subfamily. As to quaternary structure, homodimer. Expressed in roots, stems, leaves and flowers.

It carries out the reaction (S)-3'-hydroxy-N-methylcoclaurine + S-adenosyl-L-methionine = (S)-reticuline + S-adenosyl-L-homocysteine + H(+). It functions in the pathway alkaloid biosynthesis; (S)-reticuline biosynthesis; (S)-reticuline from (S)-norcoclaurine: step 4/4. Its function is as follows. Involved in the biosynthesis of benzylisoquinoline alkaloids. Catalyzes the transfer of the methyl group to the 4'-hydroxyl group of 3'-hydroxy-N-methylcoclaurine to form reticuline. Can also use laudanosoline and, with a lower activity, 6-O-methylnorlaudanosoline and norlaudanosoline as substrates. Also involved in the papaverine biosynthesis. The sequence is that of 3'-hydroxy-N-methyl-(S)-coclaurine 4'-O-methyltransferase 2 from Papaver somniferum (Opium poppy).